The chain runs to 606 residues: MSEIIAYKLNGELIDTQSINGREAVAQPVYFDNSPDALHVIRHSCAHLMAQAIKSLYPNAKFFVGPNVEDGFYYDFRVDEAGTKLGESDLEAIEKKMKELAEAKFEITKICSTKAAMSEKFKNDDLKQEVLKRIPEGEVSSYAQGDFEDLCRGPHVPNTKFLRFFKLTRVAGAYLGGDETREMLNRIYGTAYADKASLAEHIRIIEEAKKRDHRKLGVEMKLFGFDEEVGGGLPIWLPNGGRLRSKLEQILYKAHRDRGYEPVRGPELLKADVWKRSGHYANYKENMYFTTIDDAEYGIKPMNCVGHIKVYQTEIRSYRDLPLKFFEYGVVHRHEKSGVLHGLFRVREFAQDDSHIFCMPSQIKQNILEILSFAGKIMQNFGFEYEMEISTKPAKAIGSDEIWDIATNALKEALDENGFKYGIDEGGGAFYGPKIDIKITDALKRKWQCGTIQVDFNLPERFDLGYIDANNERQRPVMLHRALLGSFERFIGILIEHTAGELPFFIAPTQVVIVPISDAHLDYAKEIARELRKFNIDSEVASKNESLNKRIRTAEKQRVPMIIVLGDNEVANRSVALRDRQARTQSDMSLAEFLNLTKEKLSEVHF.

Residues 212 to 503 form a catalytic region; that stretch reads DHRKLGVEMK…LIEHTAGELP (292 aa). 3 residues coordinate Zn(2+): cysteine 304, histidine 355, and histidine 480.

Belongs to the class-II aminoacyl-tRNA synthetase family. As to quaternary structure, homodimer. It depends on Zn(2+) as a cofactor.

The protein resides in the cytoplasm. It catalyses the reaction tRNA(Thr) + L-threonine + ATP = L-threonyl-tRNA(Thr) + AMP + diphosphate + H(+). Functionally, catalyzes the attachment of threonine to tRNA(Thr) in a two-step reaction: L-threonine is first activated by ATP to form Thr-AMP and then transferred to the acceptor end of tRNA(Thr). Also edits incorrectly charged L-seryl-tRNA(Thr). This chain is Threonine--tRNA ligase, found in Campylobacter curvus (strain 525.92).